A 333-amino-acid polypeptide reads, in one-letter code: Zinc-type alcohol dehydrogenase-like protein SACOL2177 (333 aa).

It belongs to the zinc-containing alcohol dehydrogenase family. Quinone oxidoreductase subfamily.

This Staphylococcus aureus (strain COL) protein is Zinc-type alcohol dehydrogenase-like protein SACOL2177.